A 441-amino-acid polypeptide reads, in one-letter code: Ribulose bisphosphate carboxylase large chain (441 aa).

Asn89 and Thr139 together coordinate substrate. The Proton acceptor role is filled by Lys141. Lys143 is a binding site for substrate. Mg(2+)-binding residues include Lys167, Asp169, and Glu170. The residue at position 167 (Lys167) is an N6-carboxylysine. His260 (proton acceptor) is an active-site residue. Substrate-binding residues include Arg261, His293, and Ser345.

This sequence belongs to the RuBisCO large chain family. Type I subfamily. Heterohexadecamer of 8 large chains and 8 small chains; disulfide-linked. The disulfide link is formed within the large subunit homodimers. Requires Mg(2+) as cofactor. In terms of processing, the disulfide bond which can form in the large chain dimeric partners within the hexadecamer appears to be associated with oxidative stress and protein turnover.

The protein resides in the plastid. It localises to the chloroplast. The catalysed reaction is 2 (2R)-3-phosphoglycerate + 2 H(+) = D-ribulose 1,5-bisphosphate + CO2 + H2O. It catalyses the reaction D-ribulose 1,5-bisphosphate + O2 = 2-phosphoglycolate + (2R)-3-phosphoglycerate + 2 H(+). RuBisCO catalyzes two reactions: the carboxylation of D-ribulose 1,5-bisphosphate, the primary event in carbon dioxide fixation, as well as the oxidative fragmentation of the pentose substrate in the photorespiration process. Both reactions occur simultaneously and in competition at the same active site. The sequence is that of Ribulose bisphosphate carboxylase large chain from Coriandrum sativum (Coriander).